Reading from the N-terminus, the 258-residue chain is Putative cysteine-rich repeat secretory protein 61 (258 aa).

An N-terminal signal peptide occupies residues 1 to 31 (MSSSFIPKRIALVLNLAMVAIQVFFIRSVSS). Gnk2-homologous domains lie at 38–140 (YLYH…PTAF) and 146–253 (DKNK…IYPF).

This sequence belongs to the cysteine-rich repeat secretory protein family.

Its subcellular location is the secreted. The protein is Putative cysteine-rich repeat secretory protein 61 (CRRSP61) of Arabidopsis thaliana (Mouse-ear cress).